The following is a 531-amino-acid chain: UDP-glucuronosyltransferase 1A6 (531 aa).

The N-terminal stretch at 1-26 (MACLLSAAQRASAGVLFVALWGTVLG) is a signal peptide. Asn294 carries an N-linked (GlcNAc...) asparagine glycan. Residues 489–505 (VIGFLLAIVLTVAFVTF) form a helical membrane-spanning segment.

The protein belongs to the UDP-glycosyltransferase family.

The protein resides in the microsome. It is found in the endoplasmic reticulum membrane. It catalyses the reaction glucuronate acceptor + UDP-alpha-D-glucuronate = acceptor beta-D-glucuronoside + UDP + H(+). The enzyme catalyses (5Z,8Z,11Z,14Z)-eicosatetraenoate + UDP-alpha-D-glucuronate = O-[(5Z),(8Z),(11Z),(14Z)-eicosatetraenoyl]-beta-D-glucuronate + UDP. The catalysed reaction is 15-hydroxy-(5Z,8Z,11Z,13E)-eicosatetraenoate + UDP-alpha-D-glucuronate = 15-O-(beta-D-glucuronosyl)-(5Z,8Z,11Z,14Z)-eicosatetraenoate + UDP + H(+). It carries out the reaction (E)-ferulate + UDP-alpha-D-glucuronate = (E)-4-O-(beta-D-glucuronosyl)-ferulate + UDP + H(+). It catalyses the reaction (E)-ferulate + UDP-alpha-D-glucuronate = (E)-ferulic acid beta-D-glucuronate ester + UDP. Functionally, UDP-glucuronosyltransferase (UGT) that catalyzes phase II biotransformation reactions in which lipophilic substrates are conjugated with glucuronic acid to facilitate their inactivation and excretion from the body. Essential for the elimination and detoxification of drugs, xenobiotics and endogenous compounds. Involved in the glucuronidation of arachidonic acid (AA) and AA-derived eicosanoids including 15-HETE and 20-HETE. Conjugates small planar phenolic molecules such as 4-nitrophenol, 1-naphthol, and 4-methylumbelliferone. The bulky phenol 4-hydroxybiphenyl, androgens and estrogens are not substrates. 2-hydroxybiphenyl is an excellent substrate. Involved in the glucuronidation of the phytochemical ferulic acid at the phenolic or the carboxylic acid group. The chain is UDP-glucuronosyltransferase 1A6 (UGT1) from Oryctolagus cuniculus (Rabbit).